The primary structure comprises 457 residues: MSKMMMNGSGTNGTAAVANNHKEMHQRCLNPYRSKVTVVLGAQWGDEGKGKVVDMLATEADVVCRCQGGNNAGHTVVVNGKDFDFHLLPSGIINDKCTSIIGNGVVIHLPGLFDELAKNEAKGLTNWESRLVISNRAHLVFDLHQQVDGLQEAEKGGKSLGTTKKGIGPCYSSKATRNGIRVSDLLGDFKVFSEKFESLVNMYKRLFPNFEVDVASELVRYRDYAERLRPLVRDTVSLVHASLKEGKSVLVEGANAAMLDIDFGTYPYVTSSNCSIGGVLTGLGLPPQTIGEVVGVVKAYTTRVGDGPFPTELHDEIGSLLQKRGGEIGVTTKRVRRCGWLDLALLRYTGMVNGYTSICLTKLDILDTLKEIKVAVSYTLRGEKIDYFPGSITDLAQVEVNYITMPGWLKSTENVRDFNELPPEAQDYIRMIENDLGVPVKWIGVGKGRESIINVKE.

Residues glycine 45–lysine 51 and glycine 73–threonine 75 contribute to the GTP site. Catalysis depends on aspartate 46, which acts as the Proton acceptor. The Mg(2+) site is built by aspartate 46 and glycine 73. Residues aspartate 46–lysine 49, asparagine 71–histidine 74, threonine 163, arginine 177, asparagine 255, threonine 270, and arginine 334 each bind IMP. The active-site Proton donor is the histidine 74. Residue valine 330–arginine 336 participates in substrate binding. Residues arginine 336, lysine 362 to aspartate 364, and glycine 444 to glycine 446 contribute to the GTP site.

It belongs to the adenylosuccinate synthetase family. As to quaternary structure, homodimer. Mg(2+) is required as a cofactor.

It is found in the cytoplasm. It catalyses the reaction IMP + L-aspartate + GTP = N(6)-(1,2-dicarboxyethyl)-AMP + GDP + phosphate + 2 H(+). It participates in purine metabolism; AMP biosynthesis via de novo pathway; AMP from IMP: step 1/2. Its function is as follows. Plays an important role in the de novo pathway and in the salvage pathway of purine nucleotide biosynthesis. Catalyzes the first committed step in the biosynthesis of AMP from IMP. This Aedes aegypti (Yellowfever mosquito) protein is Adenylosuccinate synthetase.